The sequence spans 154 residues: Cyanate hydratase (154 aa).

Residues R100, E103, and S126 contribute to the active site.

It belongs to the cyanase family.

It carries out the reaction cyanate + hydrogencarbonate + 3 H(+) = NH4(+) + 2 CO2. Its function is as follows. Catalyzes the reaction of cyanate with bicarbonate to produce ammonia and carbon dioxide. In Aspergillus clavatus (strain ATCC 1007 / CBS 513.65 / DSM 816 / NCTC 3887 / NRRL 1 / QM 1276 / 107), this protein is Cyanate hydratase.